The primary structure comprises 70 residues: Large ribosomal subunit protein bL31 (70 aa).

C16, C18, C37, and C40 together coordinate Zn(2+).

Belongs to the bacterial ribosomal protein bL31 family. Type A subfamily. In terms of assembly, part of the 50S ribosomal subunit. Requires Zn(2+) as cofactor.

Binds the 23S rRNA. This is Large ribosomal subunit protein bL31 from Shewanella denitrificans (strain OS217 / ATCC BAA-1090 / DSM 15013).